Reading from the N-terminus, the 218-residue chain is Albicidin resistance protein (218 aa).

Its subcellular location is the periplasm. In terms of biological role, albicidin resistance protein binds to form a complex without antibiotic activity but without catalyzing any further chemical modifications to albicidin. This chain is Albicidin resistance protein, found in Klebsiella oxytoca.